The primary structure comprises 417 residues: MGKRWDSNSSGSWDHIWSGNDTQHPWYSDINITYMNYYLHQPHVTAVFISSYFLIFFLCMVGNTVVCFVVIRNRYMHTVTNFFIFNLAISDLLVGIFCMPITLLDNIIAGWPFGSSMCKISGLVQGISVAASVFTLVAIAVDRFRCVVYPFKPKLTVKTAFVMIVIIWGLAITIMTPSAIMLHVQEEKYYRVRLSSHNKTSTVYWCREDWPNQEMRRIYTTVLFATIYLAPLSLIVIMYARIGASLFKTSAHSTGKQRLEQWHVSKKKQKVIKMLLTVALLFILSWLPLWTLMMLSDYADLSPNKLRVINIYVYPFAHWLAFCNSSVNPIIYGFFNENFRSGFQDAFQFCQKKVKPQEAYGLRAKRNLDINTSGLLVHEPASQNPSGENLGCRKSADNPTQESLMEETGEATNSTET.

Residues 1-45 (MGKRWDSNSSGSWDHIWSGNDTQHPWYSDINITYMNYYLHQPHVT) are Extracellular-facing. 3 N-linked (GlcNAc...) asparagine glycosylation sites follow: Asn-8, Asn-20, and Asn-31. A helical transmembrane segment spans residues 46–66 (AVFISSYFLIFFLCMVGNTVV). The Cytoplasmic segment spans residues 67–82 (CFVVIRNRYMHTVTNF). A helical membrane pass occupies residues 83–103 (FIFNLAISDLLVGIFCMPITL). Residues 104–119 (LDNIIAGWPFGSSMCK) lie on the Extracellular side of the membrane. The cysteines at positions 118 and 206 are disulfide-linked. A helical membrane pass occupies residues 120–140 (ISGLVQGISVAASVFTLVAIA). At 141–160 (VDRFRCVVYPFKPKLTVKTA) the chain is on the cytoplasmic side. A helical membrane pass occupies residues 161–181 (FVMIVIIWGLAITIMTPSAIM). At 182–217 (LHVQEEKYYRVRLSSHNKTSTVYWCREDWPNQEMRR) the chain is on the extracellular side. Asn-198 carries N-linked (GlcNAc...) asparagine glycosylation. Residues 218 to 238 (IYTTVLFATIYLAPLSLIVIM) form a helical membrane-spanning segment. The Cytoplasmic portion of the chain corresponds to 239-274 (YARIGASLFKTSAHSTGKQRLEQWHVSKKKQKVIKM). The chain crosses the membrane as a helical span at residues 275–295 (LLTVALLFILSWLPLWTLMML). The Extracellular segment spans residues 296–310 (SDYADLSPNKLRVIN). Residues 311–331 (IYVYPFAHWLAFCNSSVNPII) traverse the membrane as a helical segment. The Cytoplasmic portion of the chain corresponds to 332–417 (YGFFNENFRS…TGEATNSTET (86 aa)). The tract at residues 378-417 (HEPASQNPSGENLGCRKSADNPTQESLMEETGEATNSTET) is disordered.

The protein belongs to the G-protein coupled receptor 1 family.

The protein localises to the cell membrane. In terms of biological role, receptor for NPAF (A-18-F-amide) and NPFF (F-8-F-amide) neuropeptides, also known as morphine-modulating peptides. Can also be activated by a variety of naturally occurring or synthetic FMRF-amide like ligands. This receptor mediates its action by association with G proteins that activate a phosphatidylinositol-calcium second messenger system. This is Neuropeptide FF receptor 2 (Npffr2) from Rattus norvegicus (Rat).